Consider the following 294-residue polypeptide: Mitochondrial HMG-box protein CIM1 (294 aa).

Residues 1 to 90 (MKATLLLKAQ…RLYYASFCQS (90 aa)) constitute a mitochondrion transit peptide. The segment at 27–102 (NRTPYTAFQY…IDILNVSKIE (76 aa)) is HMG-box A. Residues 110–258 (PIPAMSEYLL…IQILQKNMDI (149 aa)) are HMG-box B.

Its subcellular location is the mitochondrion matrix. Functionally, mitochondrial HMG-box protein that limits the copy number of mitochondrial DNA (mtDNA), antagonizing HMG-box containing protein ABF2, a mtDNA packaging factor. This chain is Mitochondrial HMG-box protein CIM1, found in Saccharomyces cerevisiae (strain ATCC 204508 / S288c) (Baker's yeast).